We begin with the raw amino-acid sequence, 90 residues long: Interferon alpha-inducible protein 27-like protein 2A (90 aa).

The first 24 residues, Met-1 to Ala-24, serve as a signal peptide directing secretion. The next 2 membrane-spanning stretches (helical) occupy residues Phe-28–Ile-48 and Gly-67–Leu-89.

The protein belongs to the IFI6/IFI27 family. Homodimer. Interacts with SKP2. Interacts with NR4A1. May interact with BCL2.

The protein localises to the nucleus inner membrane. In terms of biological role, may be involved in the interferon-induced negative regulation of the transcriptional activity of NR4A1, NR4A2 and NR4A3 through the enhancement of XPO1-mediated nuclear export of these nuclear receptors. Through the regulation of NR4A1 transcriptional activity, may play a role in the vascular response to injury. In Mus musculus (Mouse), this protein is Interferon alpha-inducible protein 27-like protein 2A.